The sequence spans 949 residues: Serine/threonine-protein kinase KIPK2 (949 aa).

Disordered stretches follow at residues 79–116 (LETSASAGTSRSTSPSNKGAMKKPFPMGTPRSPRVGPS), 323–344 (TALSSGLKGKLDNFPGSGTEKS), 407–426 (STSTENHPPSNTSHTTDKNV), and 495–525 (SSEKFDFSLSSKNSLGDYSSSTSMSEESNLS). The span at 81-94 (TSASAGTSRSTSPS) shows a compositional bias: low complexity. Polar residues-rich tracts occupy residues 407–420 (STSTENHPPSNTSH) and 495–512 (SSEKFDFSLSSKNSLGDY). Residues 513–525 (SSSTSMSEESNLS) show a composition bias toward low complexity. The region spanning 559 to 898 (FNLLKKLGCG…AAEIKRHPFF (340 aa)) is the Protein kinase domain. Residues 565–573 (LGCGDIGTV) and lysine 588 contribute to the ATP site. The active-site Proton acceptor is aspartate 684.

Belongs to the protein kinase superfamily. Ser/Thr protein kinase family. As to quaternary structure, interacts with KCBP, PERK8, PERK9, PERK10 and PERK13.

The catalysed reaction is L-seryl-[protein] + ATP = O-phospho-L-seryl-[protein] + ADP + H(+). The enzyme catalyses L-threonyl-[protein] + ATP = O-phospho-L-threonyl-[protein] + ADP + H(+). In terms of biological role, serine/threonine-protein kinase that could be involved in the negative regulation of root growth. In Arabidopsis thaliana (Mouse-ear cress), this protein is Serine/threonine-protein kinase KIPK2.